The sequence spans 135 residues: Large ribosomal subunit protein bL17 (135 aa).

The protein belongs to the bacterial ribosomal protein bL17 family. As to quaternary structure, part of the 50S ribosomal subunit. Contacts protein L32.

The protein is Large ribosomal subunit protein bL17 of Listeria welshimeri serovar 6b (strain ATCC 35897 / DSM 20650 / CCUG 15529 / CIP 8149 / NCTC 11857 / SLCC 5334 / V8).